Consider the following 314-residue polypeptide: N-alpha-acetyltransferase 80 (314 aa).

The region spanning 90-243 (LEPVHCRPEL…TTVLRAFSKP (154 aa)) is the N-acetyltransferase domain. Substrate is bound by residues Arg113 and 118–121 (RLHS). Acetyl-CoA is bound by residues 169-171 (VVV), 177-182 (GRGFGR), and Gln207. The interval 260–295 (VPRSSKGPPLPPPPPLPQSLTASPPPSPEPLPQSPL) is disordered. Residues 267–292 (PPLPPPPPLPQSLTASPPPSPEPLPQ) are compositionally biased toward pro residues.

The protein belongs to the acetyltransferase family.

The protein localises to the cytoplasm. It localises to the cytosol. The enzyme catalyses N-terminal L-aspartyl-L-aspartyl-L-aspartyl-[protein] + acetyl-CoA = N-terminal N-acetyl-L-aspartyl-L-aspartyl-L-aspartyl-[protein] + CoA + H(+). The catalysed reaction is N-terminal L-glutamyl-L-glutamyl-L-glutamyl-[protein] + acetyl-CoA = N-terminal N-acetyl-L-glutamyl-L-glutamyl-L-glutamyl-[protein] + CoA + H(+). N-alpha-acetyltransferase that specifically mediates the acetylation of the acidic amino terminus of processed forms of beta- and gamma-actin (ACTB and ACTG, respectively). N-terminal acetylation of processed beta- and gamma-actin regulates actin filament depolymerization and elongation. In vivo, preferentially displays N-terminal acetyltransferase activity towards acid N-terminal sequences starting with Asp-Asp-Asp and Glu-Glu-Glu. In vitro, shows high activity towards Met-Asp-Glu-Leu and Met-Asp-Asp-Asp. May act as a tumor suppressor. The polypeptide is N-alpha-acetyltransferase 80 (Mus musculus (Mouse)).